The sequence spans 88 residues: Antitoxin HipB (88 aa).

The region spanning 17 to 71 (MKLVRQQNGWTQSELAKKIGIKQATISNFENNPDNTTLTTFFKILQSLELSMTLC) is the HTH cro/C1-type domain. Residues 21–47 (RQQNGWTQSELAKKIGIKQATISNFEN) constitute a DNA-binding region (H-T-H motif).

As to quaternary structure, homodimer. Binds operator DNA sites in the absence of HipA, inducing a 70 degree bend in consecutive operators and deforming DNA between the operators so that HipB dimers bind on opposite faces of the DNA. Forms a HipA(2)HipB(2) heterotetramer which can interact with a single operator site on DNA, inducing a 70 degree bend. When 2 operators are present each HipB dimer contacts 1 HipA molecule, which are brought together by the DNA bend and dimerize, blocking the HipA active site and inactivating its toxic activity. HipA-HipB-induced bending also distorts the -35 and -10 boxes of the promoter and probably prevents sigma-factor binding, and additionally bound HipB and HipA block RNA polymerase access to the -35 box, thus repressing the operon. This complex also blocks the toxic activity of HipA. Mutations present in allele hipA7 (G22S and D291A) decrease the affinity of HipA for HipB. Degraded by Lon protease in vivo; half-life is 17 minutes in wild-type cells and over 200 minutes in a lon deletion strain. In vitro degradation by Lon is Mg(2+)-ATP-dependent.

Degraded by Lon protease; degradation is inhibited in a HipA-HipB complex and when bound to the operator consensus sequence dsDNA. Antitoxin component of a type II toxin-antitoxin (TA) system. Neutralizes the toxic effect of cognate toxin HipA. Also neutralizes the toxic effect of non-cognate toxin YjjJ. Binds to operator sites with the consensus sequence 5-'TATCCN(8)GGATA-3' to repress the hipBA operon promoter; binding of HipB(2) to DNA induces a 70 degree bend. This forces HipA dimerization, which blocks HipA's active site and thus its toxic action. May play a role in biofilm formation. The sequence is that of Antitoxin HipB (hipB) from Escherichia coli (strain K12).